Here is a 339-residue protein sequence, read N- to C-terminus: Ketol-acid reductoisomerase (NADP(+)) (339 aa).

The 182-residue stretch at 1-182 folds into the KARI N-terminal Rossmann domain; that stretch reads MRVYYDRDAD…GGGRSGVIET (182 aa). Residues 24-27, Arg-48, Ser-51, Thr-53, and 83-86 contribute to the NADP(+) site; these read YGSQ and DELQ. His-108 is a catalytic residue. Gly-134 is a binding site for NADP(+). In terms of domain architecture, KARI C-terminal knotted spans 183–328; it reads TFKEECETDL…GKLRAMMPWI (146 aa). Residues Asp-191, Glu-195, Glu-227, and Glu-231 each contribute to the Mg(2+) site. Residue Ser-252 participates in substrate binding.

It belongs to the ketol-acid reductoisomerase family. Mg(2+) serves as cofactor.

It carries out the reaction (2R)-2,3-dihydroxy-3-methylbutanoate + NADP(+) = (2S)-2-acetolactate + NADPH + H(+). The enzyme catalyses (2R,3R)-2,3-dihydroxy-3-methylpentanoate + NADP(+) = (S)-2-ethyl-2-hydroxy-3-oxobutanoate + NADPH + H(+). It participates in amino-acid biosynthesis; L-isoleucine biosynthesis; L-isoleucine from 2-oxobutanoate: step 2/4. The protein operates within amino-acid biosynthesis; L-valine biosynthesis; L-valine from pyruvate: step 2/4. Functionally, involved in the biosynthesis of branched-chain amino acids (BCAA). Catalyzes an alkyl-migration followed by a ketol-acid reduction of (S)-2-acetolactate (S2AL) to yield (R)-2,3-dihydroxy-isovalerate. In the isomerase reaction, S2AL is rearranged via a Mg-dependent methyl migration to produce 3-hydroxy-3-methyl-2-ketobutyrate (HMKB). In the reductase reaction, this 2-ketoacid undergoes a metal-dependent reduction by NADPH to yield (R)-2,3-dihydroxy-isovalerate. The chain is Ketol-acid reductoisomerase (NADP(+)) from Brucella melitensis biotype 2 (strain ATCC 23457).